The sequence spans 632 residues: Pentatricopeptide repeat-containing protein ELI1, chloroplastic (632 aa).

Residues 1–19 (MASSPLLATSLPQNQLSTT) constitute a chloroplast transit peptide. PPR repeat units lie at residues 94–128 (DLFL…EINP), 129–159 (NEFT…GLGI), 160–194 (DPYV…SLVS), 196–221 (TAMI…MCER), 222–256 (DIVS…GKPK), 258–292 (DEIT…RIRL), 293–323 (NVKV…TPRK), 324–354 (DIVA…MQGI), 360–395 (TDIT…GIKP), and 396–426 (KIEH…MNMD). The tract at residues 431–506 (LWSSVLGSCK…EPGISTIEIE (76 aa)) is type E motif. The segment at 497–512 (EPGISTIEIENKVHEF) is required for function in RNA editing. The segment at 507–537 (NKVHEFRAGDREHSKSKEIYTMLRKISERIK) is type E(+) motif. Residues 538-632 (SHGYVPNTNT…DGSCSCGDFW (95 aa)) are type DYW motif.

Belongs to the PPR family. PCMP-H subfamily. The cofactor is Zn(2+).

It localises to the plastid. The protein resides in the chloroplast. In terms of biological role, plays a major role in single RNA editing events in chloroplasts. Acts as a site-recognition transacting factor involved in the edition of the site 5 of ndhB1 and ndhB2 (ndhB1-5 and ndhB2-5 sites corresponding to cytidine-830), which are plastid-encoded subunits of the NADH-plastoquinone oxidoreductase. May provide the catalytic activity for editing site conversion. The sequence is that of Pentatricopeptide repeat-containing protein ELI1, chloroplastic from Arabidopsis thaliana (Mouse-ear cress).